A 415-amino-acid polypeptide reads, in one-letter code: Tyrosine--tRNA ligase (415 aa).

Position 34 (tyrosine 34) interacts with L-tyrosine. The 'HIGH' region motif lies at proline 39–asparagine 48. 2 residues coordinate L-tyrosine: tyrosine 162 and glutamine 166. The 'KMSKS' region signature appears at lysine 224–serine 228. Position 227 (lysine 227) interacts with ATP. Positions isoleucine 346 to asparagine 413 constitute an S4 RNA-binding domain.

The protein belongs to the class-I aminoacyl-tRNA synthetase family. TyrS type 1 subfamily. In terms of assembly, homodimer.

It is found in the cytoplasm. The enzyme catalyses tRNA(Tyr) + L-tyrosine + ATP = L-tyrosyl-tRNA(Tyr) + AMP + diphosphate + H(+). Its function is as follows. Catalyzes the attachment of tyrosine to tRNA(Tyr) in a two-step reaction: tyrosine is first activated by ATP to form Tyr-AMP and then transferred to the acceptor end of tRNA(Tyr). The chain is Tyrosine--tRNA ligase from Ureaplasma parvum serovar 3 (strain ATCC 27815 / 27 / NCTC 11736).